We begin with the raw amino-acid sequence, 440 residues long: Ribosomal protein uS12 methylthiotransferase RimO (440 aa).

The MTTase N-terminal domain occupies K2–E118. 6 residues coordinate [4Fe-4S] cluster: C11, C47, C81, C154, C158, and C161. In terms of domain architecture, Radical SAM core spans I140–K370. Positions A373–V440 constitute a TRAM domain.

This sequence belongs to the methylthiotransferase family. RimO subfamily. [4Fe-4S] cluster is required as a cofactor.

Its subcellular location is the cytoplasm. It carries out the reaction L-aspartate(89)-[ribosomal protein uS12]-hydrogen + (sulfur carrier)-SH + AH2 + 2 S-adenosyl-L-methionine = 3-methylsulfanyl-L-aspartate(89)-[ribosomal protein uS12]-hydrogen + (sulfur carrier)-H + 5'-deoxyadenosine + L-methionine + A + S-adenosyl-L-homocysteine + 2 H(+). Its function is as follows. Catalyzes the methylthiolation of an aspartic acid residue of ribosomal protein uS12. The protein is Ribosomal protein uS12 methylthiotransferase RimO of Dictyoglomus thermophilum (strain ATCC 35947 / DSM 3960 / H-6-12).